Consider the following 91-residue polypeptide: Small ribosomal subunit protein bS6 (91 aa).

The protein belongs to the bacterial ribosomal protein bS6 family.

Its function is as follows. Binds together with bS18 to 16S ribosomal RNA. This chain is Small ribosomal subunit protein bS6, found in Leptospira biflexa serovar Patoc (strain Patoc 1 / Ames).